The sequence spans 544 residues: MAAKDVRFGNDARVKMLEGVNILADAVKVTLGPKGRNVVLDKSFGAPTITKDGVSVAREIELEDKFQNMGAQMVKEVASQANDAAGDGTTTATVLAQAIVNEGLKAVAAGMNPMDLKRGIDKAVIAAVEELKALSVPCADTKAIAQVGTISANSDSSVGNIIAEAMEKVGRDGVITVEEGQALQDELDVVEGMQFDRGYLSPYFINNQESGSVELDNPFILLVDKKISNIRELLPVLEGVAKASRPLLIVAEDVEGEALATLVVNNMRGIVKVAAVKAPGFGDRRKAMLQDIAILTGGVVISEEIGLELEKATLEDLGQAKRVSITKENSTIIDGAGDQAAIQGRVAQIRQQIEEATSDYDKEKLQERVAKLAGGVAVIKVGAATEVEMKEKKDRVEDALHATRAAVEEGVVAGGGVALIRAASKLSSLVGDNEEQNVGIRVALRAMEAPLRQIVKNAGDEESVVANNVRAGEGNYGYNAATGVYGDMIEMGILDPTKVTRSALQFAASVAGLMITTEAMITELPKKDAPAMPDMGMGGMGGMM.

Residues 30 to 33 (TLGP), Lys51, 87 to 91 (DGTTT), Gly415, 479 to 481 (NAA), and Asp495 each bind ATP.

The protein belongs to the chaperonin (HSP60) family. In terms of assembly, forms a cylinder of 14 subunits composed of two heptameric rings stacked back-to-back. Interacts with the co-chaperonin GroES.

The protein localises to the cytoplasm. It carries out the reaction ATP + H2O + a folded polypeptide = ADP + phosphate + an unfolded polypeptide.. Together with its co-chaperonin GroES, plays an essential role in assisting protein folding. The GroEL-GroES system forms a nano-cage that allows encapsulation of the non-native substrate proteins and provides a physical environment optimized to promote and accelerate protein folding. This is Chaperonin GroEL 1 from Vibrio cholerae serotype O1 (strain ATCC 39315 / El Tor Inaba N16961).